The primary structure comprises 81 residues: Photosystem I iron-sulfur center (81 aa).

4Fe-4S ferredoxin-type domains are found at residues 2 to 31 (SHSVKIYDTCIGCTQCVRACPTDVLEMIPW) and 39 to 68 (IASAPRTEDCVGCKRCESACPTDFLSVRVY). [4Fe-4S] cluster contacts are provided by Cys11, Cys14, Cys17, Cys21, Cys48, Cys51, Cys54, and Cys58.

As to quaternary structure, the eukaryotic PSI reaction center is composed of at least 11 subunits. [4Fe-4S] cluster serves as cofactor.

It localises to the plastid thylakoid membrane. It carries out the reaction reduced [plastocyanin] + hnu + oxidized [2Fe-2S]-[ferredoxin] = oxidized [plastocyanin] + reduced [2Fe-2S]-[ferredoxin]. In terms of biological role, apoprotein for the two 4Fe-4S centers FA and FB of photosystem I (PSI); essential for photochemical activity. FB is the terminal electron acceptor of PSI, donating electrons to ferredoxin. The C-terminus interacts with PsaA/B/D and helps assemble the protein into the PSI complex. Required for binding of PsaD and PsaE to PSI. PSI is a plastocyanin-ferredoxin oxidoreductase, converting photonic excitation into a charge separation, which transfers an electron from the donor P700 chlorophyll pair to the spectroscopically characterized acceptors A0, A1, FX, FA and FB in turn. In Cuscuta reflexa (Southern Asian dodder), this protein is Photosystem I iron-sulfur center.